The chain runs to 1340 residues: Pleckstrin homology domain-containing family G member 2 (1340 aa).

Positions 34-44 are enriched in polar residues; the sequence is TPTAQAATTMA. Residues 34–76 are disordered; sequence TPTAQAATTMASPRGSGSSTSLSTVGSEGDPSPACSASRPEPL. Over residues 45–62 the composition is skewed to low complexity; the sequence is SPRGSGSSTSLSTVGSEG. Residues 98-279 form the DH domain; the sequence is RLERVAREIV…TAVAWYINDM (182 aa). The PH domain maps to 309–407; that stretch reads ELVLEGTFRG…WIHCLQRLFF (99 aa). Disordered regions lie at residues 431–623, 684–743, 820–855, 907–979, 991–1028, 1047–1069, and 1125–1146; these read PKSK…IPCI, LPGP…SVQG, MQRAETRASTNAPRRRPRVLAQPQPSPCPPQEEAEP, NVSD…PSAG, TTSLPGQECQADTVALSKQEGHEDSQNPNKAPGAEQRD, PVCTSSPDQQIPATTPLPLSTDF, and PLSSHKQEDAPECLGPEPSLTD. At T441 the chain carries Phosphothreonine. 2 positions are modified to phosphoserine: S446 and S465. Residues 560 to 572 show a composition bias toward basic and acidic residues; it reads DIPKFPRDSRVPV. Residues 588–600 are compositionally biased toward acidic residues; sequence SEEEEEEDLETDE. 5 stretches are compositionally biased toward polar residues: residues 703-714, 820-831, 907-921, 930-945, and 956-972; these read SGSNPGRLSESP, MQRAETRASTNA, NVSDLSKQGHLSSNS, GQSNFQNIQVPSTSLL, and PTASTLPDTSQLQSQVP. Polar residues predominate over residues 1049 to 1059; that stretch reads CTSSPDQQIPA. A Phosphothreonine modification is found at T1215. 2 positions are modified to phosphoserine: S1219 and S1269. The interval 1250 to 1340 is disordered; that stretch reads RRQGPGGEGT…VGPSQGPGGS (91 aa). The span at 1276–1288 shows a compositional bias: pro residues; the sequence is PSPPPQPQPPAPP. Over residues 1319-1333 the composition is skewed to low complexity; it reads HPALLAAPHPGAVGP.

In terms of tissue distribution, expressed in thymus, skeletal muscle, lung, testis, uterus, pancreas and heart and also expressed during embryogenesis.

Its function is as follows. May be a transforming oncogene with exchange activity for CDC42. May be a guanine-nucleotide exchange factor (GEF) for RAC1 and CDC42. Activated by the binding to subunits beta and gamma of the heterotrimeric guanine nucleotide-binding protein (G protein). Involved in the regulation of actin polymerization. This Mus musculus (Mouse) protein is Pleckstrin homology domain-containing family G member 2 (Plekhg2).